The following is a 178-amino-acid chain: ATP synthase subunit delta (178 aa).

This sequence belongs to the ATPase delta chain family. As to quaternary structure, F-type ATPases have 2 components, F(1) - the catalytic core - and F(0) - the membrane proton channel. F(1) has five subunits: alpha(3), beta(3), gamma(1), delta(1), epsilon(1). F(0) has three main subunits: a(1), b(2) and c(10-14). The alpha and beta chains form an alternating ring which encloses part of the gamma chain. F(1) is attached to F(0) by a central stalk formed by the gamma and epsilon chains, while a peripheral stalk is formed by the delta and b chains.

The protein resides in the cell membrane. In terms of biological role, f(1)F(0) ATP synthase produces ATP from ADP in the presence of a proton or sodium gradient. F-type ATPases consist of two structural domains, F(1) containing the extramembraneous catalytic core and F(0) containing the membrane proton channel, linked together by a central stalk and a peripheral stalk. During catalysis, ATP synthesis in the catalytic domain of F(1) is coupled via a rotary mechanism of the central stalk subunits to proton translocation. Functionally, this protein is part of the stalk that links CF(0) to CF(1). It either transmits conformational changes from CF(0) to CF(1) or is implicated in proton conduction. The chain is ATP synthase subunit delta from Streptococcus pyogenes serotype M2 (strain MGAS10270).